Reading from the N-terminus, the 123-residue chain is Small ribosomal subunit protein uS12 (123 aa).

Residue aspartate 89 is modified to 3-methylthioaspartic acid. A disordered region spans residues 100–123; that stretch reads GSLDTSGVKDRKQGRSKYGAKRPK. The segment covering 113–123 has biased composition (basic residues); the sequence is GRSKYGAKRPK.

Belongs to the universal ribosomal protein uS12 family. Part of the 30S ribosomal subunit. Contacts proteins S8 and S17. May interact with IF1 in the 30S initiation complex.

Its function is as follows. With S4 and S5 plays an important role in translational accuracy. In terms of biological role, interacts with and stabilizes bases of the 16S rRNA that are involved in tRNA selection in the A site and with the mRNA backbone. Located at the interface of the 30S and 50S subunits, it traverses the body of the 30S subunit contacting proteins on the other side and probably holding the rRNA structure together. The combined cluster of proteins S8, S12 and S17 appears to hold together the shoulder and platform of the 30S subunit. The protein is Small ribosomal subunit protein uS12 of Pseudomonas aeruginosa (strain LESB58).